A 336-amino-acid chain; its full sequence is ATP-dependent 6-phosphofructokinase (336 aa).

Gly-11 lines the ATP pocket. 21–25 is an ADP binding site; the sequence is RAVVR. ATP-binding positions include 72–73 and 102–105; these read RY and GDGS. Mg(2+) is bound at residue Asp-103. Position 125–127 (125–127) interacts with substrate; the sequence is TID. Asp-127 (proton acceptor) is an active-site residue. Position 154 (Arg-154) interacts with ADP. Residues Arg-162 and 169–171 each bind substrate; that span reads MGR. ADP contacts are provided by residues 185 to 187, Lys-211, and 213 to 215; these read GAD and KKH. Substrate contacts are provided by residues Glu-222, Arg-244, and 250-253; that span reads HIQR.

Belongs to the phosphofructokinase type A (PFKA) family. ATP-dependent PFK group I subfamily. Prokaryotic clade 'B1' sub-subfamily. In terms of assembly, homotetramer. It depends on Mg(2+) as a cofactor.

It is found in the cytoplasm. The enzyme catalyses beta-D-fructose 6-phosphate + ATP = beta-D-fructose 1,6-bisphosphate + ADP + H(+). Its pathway is carbohydrate degradation; glycolysis; D-glyceraldehyde 3-phosphate and glycerone phosphate from D-glucose: step 3/4. Allosterically activated by ADP and other diphosphonucleosides, and allosterically inhibited by phosphoenolpyruvate. Catalyzes the phosphorylation of D-fructose 6-phosphate to fructose 1,6-bisphosphate by ATP, the first committing step of glycolysis. This Streptococcus suis (strain 05ZYH33) protein is ATP-dependent 6-phosphofructokinase.